Consider the following 452-residue polypeptide: Eukaryotic translation initiation factor 3 subunit E (452 aa).

Residues 1–17 (MADNTPTTANDLLNDAT) show a composition bias toward polar residues. Residues 1-23 (MADNTPTTANDLLNDATQAAAKS) form a disordered region. The PCI domain occupies 246–426 (PFFNHEPARD…GTVVMNHPPS (181 aa)).

The protein belongs to the eIF-3 subunit E family. Component of the eukaryotic translation initiation factor 3 (eIF-3) complex.

Its subcellular location is the cytoplasm. Component of the eukaryotic translation initiation factor 3 (eIF-3) complex, which is involved in protein synthesis of a specialized repertoire of mRNAs and, together with other initiation factors, stimulates binding of mRNA and methionyl-tRNAi to the 40S ribosome. The eIF-3 complex specifically targets and initiates translation of a subset of mRNAs involved in cell proliferation. The chain is Eukaryotic translation initiation factor 3 subunit E (int6) from Botryotinia fuckeliana (strain B05.10) (Noble rot fungus).